The sequence spans 452 residues: Matrilin-3 (452 aa).

The N-terminal stretch at methionine 1–glycine 24 is a signal peptide. Positions aspartate 54–phenylalanine 229 constitute a VWFA domain. EGF-like domains lie at alanine 235–serine 275, alanine 276–serine 316, alanine 317–serine 357, and alanine 358–serine 398. Cystine bridges form between cysteine 239–cysteine 250, cysteine 246–cysteine 259, cysteine 261–cysteine 274, cysteine 280–cysteine 291, cysteine 287–cysteine 300, cysteine 302–cysteine 315, cysteine 321–cysteine 332, cysteine 328–cysteine 341, cysteine 343–cysteine 356, cysteine 362–cysteine 373, cysteine 369–cysteine 382, and cysteine 384–cysteine 397. Residue asparagine 295 is glycosylated (N-linked (GlcNAc...) asparagine). Residues alanine 419 to valine 451 adopt a coiled-coil conformation.

In terms of assembly, can form homooligomers (monomers, dimers, trimers and tetramers) and heterooligomers with matrilin-1. Expression is restricted to cartilaginous tissues.

It localises to the secreted. Its function is as follows. Major component of the extracellular matrix of cartilage and may play a role in the formation of extracellular filamentous networks. This chain is Matrilin-3 (MATN3), found in Gallus gallus (Chicken).